We begin with the raw amino-acid sequence, 252 residues long: 2-succinyl-6-hydroxy-2,4-cyclohexadiene-1-carboxylate synthase (252 aa).

This sequence belongs to the AB hydrolase superfamily. MenH family. In terms of assembly, monomer.

The catalysed reaction is 5-enolpyruvoyl-6-hydroxy-2-succinyl-cyclohex-3-ene-1-carboxylate = (1R,6R)-6-hydroxy-2-succinyl-cyclohexa-2,4-diene-1-carboxylate + pyruvate. It participates in quinol/quinone metabolism; 1,4-dihydroxy-2-naphthoate biosynthesis; 1,4-dihydroxy-2-naphthoate from chorismate: step 3/7. Its pathway is quinol/quinone metabolism; menaquinone biosynthesis. Its function is as follows. Catalyzes a proton abstraction reaction that results in 2,5-elimination of pyruvate from 2-succinyl-5-enolpyruvyl-6-hydroxy-3-cyclohexene-1-carboxylate (SEPHCHC) and the formation of 2-succinyl-6-hydroxy-2,4-cyclohexadiene-1-carboxylate (SHCHC). The chain is 2-succinyl-6-hydroxy-2,4-cyclohexadiene-1-carboxylate synthase from Escherichia coli O7:K1 (strain IAI39 / ExPEC).